We begin with the raw amino-acid sequence, 182 residues long: NADH-quinone oxidoreductase subunit B 1 (182 aa).

[4Fe-4S] cluster contacts are provided by Cys-47, Cys-48, Cys-113, and Cys-142.

This sequence belongs to the complex I 20 kDa subunit family. NDH-1 is composed of 14 different subunits. Subunits NuoB, C, D, E, F, and G constitute the peripheral sector of the complex. [4Fe-4S] cluster is required as a cofactor.

The protein resides in the cell inner membrane. It carries out the reaction a quinone + NADH + 5 H(+)(in) = a quinol + NAD(+) + 4 H(+)(out). Functionally, NDH-1 shuttles electrons from NADH, via FMN and iron-sulfur (Fe-S) centers, to quinones in the respiratory chain. Couples the redox reaction to proton translocation (for every two electrons transferred, four hydrogen ions are translocated across the cytoplasmic membrane), and thus conserves the redox energy in a proton gradient. This Anaeromyxobacter dehalogenans (strain 2CP-C) protein is NADH-quinone oxidoreductase subunit B 1.